A 302-amino-acid chain; its full sequence is Glutaminase (302 aa).

Ser-61, Asn-111, Glu-155, Asn-162, Tyr-186, Tyr-238, and Val-256 together coordinate substrate.

This sequence belongs to the glutaminase family. In terms of assembly, homotetramer.

It catalyses the reaction L-glutamine + H2O = L-glutamate + NH4(+). This chain is Glutaminase, found in Pseudomonas aeruginosa (strain ATCC 15692 / DSM 22644 / CIP 104116 / JCM 14847 / LMG 12228 / 1C / PRS 101 / PAO1).